Consider the following 907-residue polypeptide: Probable dipeptidyl-aminopeptidase B (907 aa).

The segment covering 1-11 (MYDQVPYRDTD) has biased composition (basic and acidic residues). The tract at residues 1 to 71 (MYDQVPYRDT…RGKPDEDDDL (71 aa)) is disordered. Over 1–88 (MYDQVPYRDT…LKPMERKVRR (88 aa)) the chain is Cytoplasmic. Positions 22–36 (SDSNRSSIDTTSTTS) are enriched in low complexity. Residues 89–109 (AMYLLAFLMIGGWFLALAVYV) traverse the membrane as a helical; Signal-anchor for type II membrane protein segment. Residues 110 to 907 (SREHFGTPDT…PLRKRNRELV (798 aa)) lie on the Vacuolar side of the membrane. 2 N-linked (GlcNAc...) asparagine glycosylation sites follow: Asn185 and Asn341. The Charge relay system role is filled by Ser746. Residue Asn800 is glycosylated (N-linked (GlcNAc...) asparagine). Catalysis depends on charge relay system residues Asp823 and His856.

It belongs to the peptidase S9B family.

The protein resides in the vacuole membrane. The enzyme catalyses Release of an N-terminal dipeptide, Xaa-Yaa-|-Zaa-, from a polypeptide, preferentially when Yaa is Pro, provided Zaa is neither Pro nor hydroxyproline.. Functionally, type IV dipeptidyl-peptidase which removes N-terminal dipeptides sequentially from polypeptides having unsubstituted N-termini provided that the penultimate residue is proline. This Tuber melanosporum (strain Mel28) (Perigord black truffle) protein is Probable dipeptidyl-aminopeptidase B (DAPB).